Here is a 156-residue protein sequence, read N- to C-terminus: Endoribonuclease YbeY (156 aa).

Zn(2+)-binding residues include His122, His126, and His132.

It belongs to the endoribonuclease YbeY family. Zn(2+) serves as cofactor.

The protein resides in the cytoplasm. Single strand-specific metallo-endoribonuclease involved in late-stage 70S ribosome quality control and in maturation of the 3' terminus of the 16S rRNA. The sequence is that of Endoribonuclease YbeY from Bacillus cereus (strain ATCC 14579 / DSM 31 / CCUG 7414 / JCM 2152 / NBRC 15305 / NCIMB 9373 / NCTC 2599 / NRRL B-3711).